The following is a 103-amino-acid chain: Histone H4.1 (103 aa).

Gly residues predominate over residues 1 to 14 (MSGRGKGGKGLGKG). The disordered stretch occupies residues 1 to 20 (MSGRGKGGKGLGKGGAKRHR). N6-acetyl-N6-methyllysine; alternate is present on K6. N6-methyllysine; alternate is present on residues K6, K9, and K13. Position 13 is an N6-acetyl-N6-methyllysine; alternate (K13). A DNA-binding region spans residues 17 to 21 (KRHRK). N6-glutaryllysine is present on K92.

Belongs to the histone H4 family. In terms of assembly, the nucleosome is a histone octamer containing two molecules each of H2A, H2B, H3 and H4 assembled in one H3-H4 heterotetramer and two H2A-H2B heterodimers. The octamer wraps approximately 147 bp of DNA. Post-translationally, glutarylation at Lys-92 (H4K91glu) destabilizes nucleosomes by promoting dissociation of the H2A-H2B dimers from nucleosomes.

It localises to the nucleus. It is found in the chromosome. Core component of nucleosome. Nucleosomes wrap and compact DNA into chromatin, limiting DNA accessibility to the cellular machineries which require DNA as a template. Histones thereby play a central role in transcription regulation, DNA repair, DNA replication and chromosomal stability. DNA accessibility is regulated via a complex set of post-translational modifications of histones, also called histone code, and nucleosome remodeling. This is Histone H4.1 (hhfA) from Emericella nidulans (strain FGSC A4 / ATCC 38163 / CBS 112.46 / NRRL 194 / M139) (Aspergillus nidulans).